The primary structure comprises 390 residues: Substance-K receptor (390 aa).

At Met-1 to Gln-32 the chain is on the extracellular side. N-linked (GlcNAc...) asparagine glycosylation is present at Asn-19. Residues Leu-33–Trp-56 form a helical membrane-spanning segment. Over Ile-57–Asn-69 the chain is Cytoplasmic. The helical transmembrane segment at Tyr-70–Asn-90 threads the bilayer. Residues Phe-91–Tyr-107 lie on the Extracellular side of the membrane. Cysteines 106 and 181 form a disulfide. Residues Phe-108–Ala-129 traverse the membrane as a helical segment. Residues Asp-130–Lys-149 are Cytoplasmic-facing. A helical transmembrane segment spans residues Ala-150–Ser-170. At Thr-171–Leu-196 the chain is on the extracellular side. A helical transmembrane segment spans residues Tyr-197 to Ser-218. Over Val-219–Ala-251 the chain is Cytoplasmic. Residues Met-252–Leu-272 traverse the membrane as a helical segment. Over Gly-273–Leu-290 the chain is Extracellular. The chain crosses the membrane as a helical span at residues Ala-291–Leu-310. At Asn-311–Ala-390 the chain is on the cytoplasmic side. Cys-324 is lipidated: S-palmitoyl cysteine. The tract at residues His-365 to Ala-390 is disordered. The segment covering Ser-366–Ser-375 has biased composition (polar residues).

This sequence belongs to the G-protein coupled receptor 1 family.

It is found in the cell membrane. This is a receptor for the tachykinin neuropeptide substance K (neurokinin A). It is associated with G proteins that activate a phosphatidylinositol-calcium second messenger system. The rank order of affinity of this receptor to tachykinins is: substance K &gt; neuromedin-K &gt; substance P. The polypeptide is Substance-K receptor (Tacr2) (Rattus norvegicus (Rat)).